The following is a 568-amino-acid chain: Sphingosine-1-phosphate lyase 1 (568 aa).

Over 1 to 40 the chain is Lumenal; that stretch reads MPGTDLLKLKDFEPYLEILESYSTKAKNYVNGYCTKYEPW. A helical; Signal-anchor for type III membrane protein membrane pass occupies residues 41–61; the sequence is QLIAWSVLCTLLIVWVYELIF. At 62 to 568 the chain is on the cytoplasmic side; sequence QPESLWSRFK…NQMNGSPKPR (507 aa). Lysine 353 carries the N6-(pyridoxal phosphate)lysine; alternate modification. Residue lysine 353 is modified to N6-acetyllysine; alternate. 3'-nitrotyrosine is present on residues tyrosine 356 and tyrosine 366. Serine 564 carries the phosphoserine modification.

It belongs to the group II decarboxylase family. Sphingosine-1-phosphate lyase subfamily. Pyridoxal 5'-phosphate is required as a cofactor. Highest levels are found in liver, small intestine and thymus, followed by kidney, lung, heart, spleen and brain (at protein level). Also detected in stomach, testis and skeletal muscle (at protein level).

The protein resides in the endoplasmic reticulum membrane. The catalysed reaction is sphinganine 1-phosphate = hexadecanal + phosphoethanolamine. It carries out the reaction sphing-4-enine 1-phosphate = (2E)-hexadecenal + phosphoethanolamine. It participates in lipid metabolism; sphingolipid metabolism. Functionally, cleaves phosphorylated sphingoid bases (PSBs), such as sphingosine-1-phosphate, into fatty aldehydes and phosphoethanolamine. Elevates stress-induced ceramide production and apoptosis. Required for global lipid homeostasis in liver and cholesterol homeostasis in fibroblasts. Involved in the regulation of pro-inflammatory response and neutrophil trafficking. Modulates neuronal autophagy via phosphoethanolamine production which regulates accumulation of aggregate-prone proteins such as APP. Seems to play a role in establishing neuronal contact sites and axonal maintenance. The polypeptide is Sphingosine-1-phosphate lyase 1 (Mus musculus (Mouse)).